Here is a 109-residue protein sequence, read N- to C-terminus: MKHFAKVSSKNIWVIHLAKVKYNIDNDSSFFSVQCNSSNNLNNNNFNENNLKNNNNRNGNNNNNNNNNNNNNNNNNNNNNNNNNNNNNKKNDLTDTINQKKKKKKRRVK.

Residues 36–109 are disordered; it reads NSSNNLNNNN…KKKKKKRRVK (74 aa). A compositionally biased stretch (low complexity) spans 39–88; it reads NNLNNNNFNENNLKNNNNRNGNNNNNNNNNNNNNNNNNNNNNNNNNNNNN. The segment covering 99 to 109 has biased composition (basic residues); sequence QKKKKKKRRVK.

This is an uncharacterized protein from Dictyostelium discoideum (Social amoeba).